Reading from the N-terminus, the 143-residue chain is Acyl carrier protein 3, chloroplastic (143 aa).

The N-terminal 60 residues, 1–60 (MATAAAGSSLICIKSASCSLNRAQVPSGLSSLRSVSLPISGKIFPSLRSSRGPLSFRVCC), are a transit peptide targeting the chloroplast. Positions 64–139 (QETVTRVCEI…DAADLIEKLV (76 aa)) constitute a Carrier domain. S99 carries the O-(pantetheine 4'-phosphoryl)serine modification.

The protein belongs to the acyl carrier protein (ACP) family. In terms of processing, 4'-phosphopantetheine is transferred from CoA to a specific serine of apo-ACP by acpS. This modification is essential for activity because fatty acids are bound in thioester linkage to the sulfhydryl of the prosthetic group.

It is found in the plastid. The protein localises to the chloroplast. It functions in the pathway lipid metabolism; fatty acid biosynthesis. Functionally, carrier of the growing fatty acid chain in fatty acid biosynthesis. The polypeptide is Acyl carrier protein 3, chloroplastic (ACL1.3) (Cuphea lanceolata (Cigar flower)).